Here is a 354-residue protein sequence, read N- to C-terminus: Galactose-1-phosphate uridylyltransferase (354 aa).

Residues 36–72 (TVTTSEVRRDPLLGDSAPSRLAPQGRTYHPPADQCPL) are disordered. 3 residues coordinate Zn(2+): cysteine 70, cysteine 73, and histidine 114. Asparagine 154 provides a ligand contact to UDP-alpha-D-glucose. Histidine 165 is a Zn(2+) binding site. Histidine 167 acts as the Tele-UMP-histidine intermediate in catalysis. The UDP-alpha-D-glucose site is built by glutamine 169 and glutamine 332.

This sequence belongs to the galactose-1-phosphate uridylyltransferase type 1 family. The cofactor is Zn(2+).

The enzyme catalyses alpha-D-galactose 1-phosphate + UDP-alpha-D-glucose = alpha-D-glucose 1-phosphate + UDP-alpha-D-galactose. The protein operates within carbohydrate metabolism; galactose metabolism. The chain is Galactose-1-phosphate uridylyltransferase (galT) from Streptomyces lividans.